Consider the following 248-residue polypeptide: Mannose-binding protein C (248 aa).

The first 20 residues, 1 to 20, serve as a signal peptide directing secretion; sequence MSLFPSLPLLLLSVVAASYS. Residues 42–99 form the Collagen-like domain; it reads GINGFPGKDGRDGTKGEKGEPGQGLRGLQGPPGKLGPPGNPGPSGSPGPKGQKGDPGK. The interval 43-111 is disordered; that stretch reads INGFPGKDGR…DCDSSLAASE (69 aa). Residue Pro47 is modified to 4-hydroxyproline. A compositionally biased stretch (basic and acidic residues) spans 49-61; that stretch reads KDGRDGTKGEKGE. 4 positions are modified to 4-hydroxyproline: Pro73, Pro79, Pro82, and Pro88. Residues 75–87 are compositionally biased toward pro residues; it reads KLGPPGNPGPSGS. A compositionally biased stretch (basic and acidic residues) spans 93-102; that stretch reads QKGDPGKSPD. The stretch at 112 to 130 forms a coiled coil; that stretch reads RKALQTEMARIKKWLTFSL. The C-type lectin domain maps to 134-245; the sequence is VGNKFFLTNG…CSSSHLAVCE (112 aa). 2 disulfide bridges follow: Cys155/Cys244 and Cys222/Cys236.

As to quaternary structure, oligomeric complex of 3 or more homotrimers. Interacts with MASP1 and MASP2. Interacts with MEP1A and MEP1B and may inhibit their catalytic activity. Post-translationally, hydroxylation on proline residues within the sequence motif, GXPG, is most likely to be 4-hydroxy as this fits the requirement for 4-hydroxylation in vertebrates.

It localises to the secreted. Calcium-dependent lectin involved in innate immune defense. Binds mannose, fucose and N-acetylglucosamine on different microorganisms and activates the lectin complement pathway. Binds to late apoptotic cells, as well as to apoptotic blebs and to necrotic cells, but not to early apoptotic cells, facilitating their uptake by macrophages. This Pongo pygmaeus (Bornean orangutan) protein is Mannose-binding protein C (MBL2).